A 267-amino-acid chain; its full sequence is 2-keto-3-deoxy-L-rhamnonate aldolase (267 aa).

Histidine 49 (proton acceptor) is an active-site residue. Substrate is bound at residue glutamine 151. Residue glutamate 153 participates in Mg(2+) binding. Substrate is bound by residues alanine 178 and aspartate 179. Mg(2+) is bound at residue aspartate 179.

It belongs to the HpcH/HpaI aldolase family. KDR aldolase subfamily. Homohexamer. Mg(2+) is required as a cofactor.

It catalyses the reaction 2-dehydro-3-deoxy-L-rhamnonate = (S)-lactaldehyde + pyruvate. In terms of biological role, catalyzes the reversible retro-aldol cleavage of 2-keto-3-deoxy-L-rhamnonate (KDR) to pyruvate and lactaldehyde. The polypeptide is 2-keto-3-deoxy-L-rhamnonate aldolase (Salmonella typhi).